Consider the following 312-residue polypeptide: Ribonuclease HIII (312 aa).

The region spanning 95 to 311 is the RNase H type-2 domain; it reads FNCIGSDEAG…REKAQKILKP (217 aa). Positions 101, 102, and 206 each coordinate a divalent metal cation.

This sequence belongs to the RNase HII family. RnhC subfamily. Requires Mn(2+) as cofactor. Mg(2+) serves as cofactor.

It is found in the cytoplasm. The enzyme catalyses Endonucleolytic cleavage to 5'-phosphomonoester.. Its function is as follows. Endonuclease that specifically degrades the RNA of RNA-DNA hybrids. The sequence is that of Ribonuclease HIII from Staphylococcus aureus (strain MW2).